The chain runs to 621 residues: Anthranilate synthase alpha subunit 2, chloroplastic (621 aa).

The N-terminal 87 residues, 1–87 (MSAVSISAVK…SEEQFTKFKK (87 aa)), are a transit peptide targeting the chloroplast.

It belongs to the anthranilate synthase component I family. In terms of assembly, heterotetramer consisting of two non-identical subunits: a beta subunit and a large alpha subunit.

The protein resides in the plastid. It is found in the chloroplast. The catalysed reaction is chorismate + L-glutamine = anthranilate + pyruvate + L-glutamate + H(+). It participates in amino-acid biosynthesis; L-tryptophan biosynthesis; L-tryptophan from chorismate: step 1/5. Feedback inhibition by tryptophan. Functionally, part of a heterotetrameric complex that catalyzes the two-step biosynthesis of anthranilate, an intermediate in the biosynthesis of L-tryptophan. In the first step, the glutamine-binding beta subunit of anthranilate synthase (AS) provides the glutamine amidotransferase activity which generates ammonia as a substrate that, along with chorismate, is used in the second step, catalyzed by the large alpha subunit of AS to produce anthranilate. This is Anthranilate synthase alpha subunit 2, chloroplastic (ASA2) from Arabidopsis thaliana (Mouse-ear cress).